We begin with the raw amino-acid sequence, 213 residues long: Probable GTP-binding protein EngB (213 aa).

The 175-residue stretch at 30-204 (SVQSIAFMGR…REFILETLGI (175 aa)) folds into the EngB-type G domain. Residues 38-45 (GRSNSGKS), 65-69 (GKTKL), 83-86 (DLPG), 150-153 (TKID), and 183-185 (ISA) contribute to the GTP site. Mg(2+) contacts are provided by Ser-45 and Thr-67.

It belongs to the TRAFAC class TrmE-Era-EngA-EngB-Septin-like GTPase superfamily. EngB GTPase family. It depends on Mg(2+) as a cofactor.

Necessary for normal cell division and for the maintenance of normal septation. This is Probable GTP-binding protein EngB from Leptospira biflexa serovar Patoc (strain Patoc 1 / Ames).